A 440-amino-acid polypeptide reads, in one-letter code: NADH-quinone oxidoreductase subunit D (440 aa).

This sequence belongs to the complex I 49 kDa subunit family. As to quaternary structure, NDH-1 is composed of 14 different subunits. Subunits NuoB, C, D, E, F, and G constitute the peripheral sector of the complex.

Its subcellular location is the cell membrane. It carries out the reaction a quinone + NADH + 5 H(+)(in) = a quinol + NAD(+) + 4 H(+)(out). Its function is as follows. NDH-1 shuttles electrons from NADH, via FMN and iron-sulfur (Fe-S) centers, to quinones in the respiratory chain. The immediate electron acceptor for the enzyme in this species is believed to be a menaquinone. Couples the redox reaction to proton translocation (for every two electrons transferred, four hydrogen ions are translocated across the cytoplasmic membrane), and thus conserves the redox energy in a proton gradient. This Mycobacterium bovis (strain ATCC BAA-935 / AF2122/97) protein is NADH-quinone oxidoreductase subunit D.